A 726-amino-acid chain; its full sequence is Tripartite terminase subunit 1 (726 aa).

A C3H1-type zinc finger spans residues 189–217; that stretch reads CMKCYEELTLTPNQGKSLRRRLHGKFCNH. 626–633 contributes to the ATP binding site; it reads YNDVFGKR.

It belongs to the herpesviridae TRM1 protein family. As to quaternary structure, associates with TRM2 and TRM3 to form the tripartite terminase complex. Interacts with portal protein.

The protein localises to the host nucleus. Its function is as follows. Component of the molecular motor that translocates viral genomic DNA in empty capsid during DNA packaging. Forms a tripartite terminase complex together with TRM2 and TRM3 in the host cytoplasm. Once the complex reaches the host nucleus, it interacts with the capsid portal vertex. This portal forms a ring in which genomic DNA is translocated into the capsid. TRM1 carries an endonuclease activity that plays an important role for the cleavage of concatemeric viral DNA into unit length genomes. The sequence is that of Tripartite terminase subunit 1 from Homo sapiens (Human).